Here is a 382-residue protein sequence, read N- to C-terminus: Succinate--CoA ligase [ADP-forming] subunit beta (382 aa).

An ATP-grasp domain is found at 9-240 (KELFLRYGVK…PRDITEFEAY (232 aa)). ATP is bound by residues Lys45, 52–54 (GRG), Val94, and Glu99. Asn193 and Asp207 together coordinate Mg(2+). Substrate-binding positions include Asn260 and 317–319 (GIT).

Belongs to the succinate/malate CoA ligase beta subunit family. As to quaternary structure, heterotetramer of two alpha and two beta subunits. Requires Mg(2+) as cofactor.

It catalyses the reaction succinate + ATP + CoA = succinyl-CoA + ADP + phosphate. It carries out the reaction GTP + succinate + CoA = succinyl-CoA + GDP + phosphate. It participates in carbohydrate metabolism; tricarboxylic acid cycle; succinate from succinyl-CoA (ligase route): step 1/1. Its function is as follows. Succinyl-CoA synthetase functions in the citric acid cycle (TCA), coupling the hydrolysis of succinyl-CoA to the synthesis of either ATP or GTP and thus represents the only step of substrate-level phosphorylation in the TCA. The beta subunit provides nucleotide specificity of the enzyme and binds the substrate succinate, while the binding sites for coenzyme A and phosphate are found in the alpha subunit. This Pyrobaculum islandicum (strain DSM 4184 / JCM 9189 / GEO3) protein is Succinate--CoA ligase [ADP-forming] subunit beta.